The chain runs to 310 residues: Beta-ketoacyl-[acyl-carrier-protein] synthase III (310 aa).

Residues cysteine 112 and histidine 235 contribute to the active site. Residues glutamine 236–arginine 240 are ACP-binding. The active site involves asparagine 265.

This sequence belongs to the thiolase-like superfamily. FabH family. Homodimer.

Its subcellular location is the cytoplasm. It catalyses the reaction malonyl-[ACP] + acetyl-CoA + H(+) = 3-oxobutanoyl-[ACP] + CO2 + CoA. It participates in lipid metabolism; fatty acid biosynthesis. Its function is as follows. Catalyzes the condensation reaction of fatty acid synthesis by the addition to an acyl acceptor of two carbons from malonyl-ACP. Catalyzes the first condensation reaction which initiates fatty acid synthesis and may therefore play a role in governing the total rate of fatty acid production. Possesses both acetoacetyl-ACP synthase and acetyl transacylase activities. Its substrate specificity determines the biosynthesis of branched-chain and/or straight-chain of fatty acids. The protein is Beta-ketoacyl-[acyl-carrier-protein] synthase III of Geobacillus kaustophilus (strain HTA426).